Reading from the N-terminus, the 319-residue chain is Acetyl-coenzyme A carboxylase carboxyl transferase subunit alpha (319 aa).

One can recognise a CoA carboxyltransferase C-terminal domain in the interval 35–296; the sequence is NIDEEVHRLR…KAQLLADLAD (262 aa).

It belongs to the AccA family. Acetyl-CoA carboxylase is a heterohexamer composed of biotin carboxyl carrier protein (AccB), biotin carboxylase (AccC) and two subunits each of ACCase subunit alpha (AccA) and ACCase subunit beta (AccD).

It localises to the cytoplasm. It carries out the reaction N(6)-carboxybiotinyl-L-lysyl-[protein] + acetyl-CoA = N(6)-biotinyl-L-lysyl-[protein] + malonyl-CoA. It functions in the pathway lipid metabolism; malonyl-CoA biosynthesis; malonyl-CoA from acetyl-CoA: step 1/1. Its function is as follows. Component of the acetyl coenzyme A carboxylase (ACC) complex. First, biotin carboxylase catalyzes the carboxylation of biotin on its carrier protein (BCCP) and then the CO(2) group is transferred by the carboxyltransferase to acetyl-CoA to form malonyl-CoA. This is Acetyl-coenzyme A carboxylase carboxyl transferase subunit alpha from Klebsiella pneumoniae subsp. pneumoniae (strain ATCC 700721 / MGH 78578).